Reading from the N-terminus, the 158-residue chain is Transcriptional repressor NrdR (158 aa).

Residues 3 to 34 fold into a zinc finger; that stretch reads CPYCGYPDSRVIDSRPTDDNTAIRRRRECLKC. Residues 49–139 enclose the ATP-cone domain; sequence ILVIKKDNRR…VYRQFKDINT (91 aa).

This sequence belongs to the NrdR family. It depends on Zn(2+) as a cofactor.

Negatively regulates transcription of bacterial ribonucleotide reductase nrd genes and operons by binding to NrdR-boxes. This is Transcriptional repressor NrdR from Caldanaerobacter subterraneus subsp. tengcongensis (strain DSM 15242 / JCM 11007 / NBRC 100824 / MB4) (Thermoanaerobacter tengcongensis).